The following is a 27-amino-acid chain: Ferric reductase B (27 aa).

In terms of assembly, homodimer. FAD is required as a cofactor.

It carries out the reaction 2 a Fe(II)-siderophore + NAD(+) + H(+) = 2 a Fe(III)-siderophore + NADH. Functionally, reductase activity that acts on Fe(3+)-chelates and uses both NADH and NADPH as electron donors. May play a role in iron uptake. In Paracoccus denitrificans, this protein is Ferric reductase B (ferB).